Consider the following 992-residue polypeptide: GATOR2 complex protein WDR59 (992 aa).

7 WD repeats span residues Gln-57–Gly-98, Gly-103–Val-143, Ser-146–Glu-185, Ala-189–Asn-229, Pro-232–His-276, Phe-278–Tyr-318, and Gln-319–His-362. Positions Pro-343–Pro-373 are disordered. Positions Glu-344–Pro-373 are enriched in basic and acidic residues. The RWD domain occupies Gln-393–Phe-494. The residue at position 564 (Ser-564) is a Phosphoserine. A WD 8 repeat occupies Lys-660–Cys-706. Ser-839, Ser-840, and Ser-848 each carry phosphoserine. The interval Leu-849–Asp-870 is disordered. Residues Asp-853 to Leu-869 show a composition bias toward basic and acidic residues. A C4-type zinc finger spans residues Tyr-919–Thr-939. The Zn(2+) site is built by Cys-920, Cys-923, Cys-932, Cys-935, Cys-945, Cys-956, His-961, His-964, His-967, Cys-978, Cys-982, Cys-984, and Cys-986. An RING-type; atypical zinc finger spans residues Phe-940 to Glu-989.

It belongs to the WD repeat WDR59 family. As to quaternary structure, component of the GATOR2 subcomplex, composed of MIOS, SEC13, SEH1L, WDR24 and WDR59. The GATOR2 complex interacts with CASTOR1 and CASTOR2; the interaction is negatively regulated by arginine. The GATOR2 complex interacts with SESN1, SESN2 and SESN3; the interaction is negatively regulated by amino acids. Interacts with DDB1-CUL4A/B E3 ligase complexes.

It localises to the lysosome membrane. The GATOR2 complex is negatively regulated by the upstream amino acid sensors CASTOR1 and SESN2, which sequester the GATOR2 complex in absence of amino acids. In the presence of abundant amino acids, GATOR2 is released from CASTOR1 and SESN2 and activated. Its function is as follows. As a component of the GATOR2 complex, functions as an activator of the amino acid-sensing branch of the mTORC1 signaling pathway. The GATOR2 complex indirectly activates mTORC1 through the inhibition of the GATOR1 subcomplex. GATOR2 probably acts as an E3 ubiquitin-protein ligase toward GATOR1. In the presence of abundant amino acids, the GATOR2 complex mediates ubiquitination of the NPRL2 core component of the GATOR1 complex, leading to GATOR1 inactivation. In the absence of amino acids, GATOR2 is inhibited, activating the GATOR1 complex. The protein is GATOR2 complex protein WDR59 of Mus musculus (Mouse).